The primary structure comprises 178 residues: uncharacterized protein (178 aa).

A helical transmembrane segment spans residues 7–29; the sequence is FFVIFSILWGSLFLFSIIGSLGT.

The protein resides in the membrane. This is an uncharacterized protein from Bacillus subtilis (strain 168).